The sequence spans 527 residues: Phospholipase A1-Igamma3, chloroplastic (527 aa).

Residues 1 to 52 (MASLSLPITLKNPRFFSSSPQNIFKTQPQTLVLTTKFKTCSIICSSSCTSIS) constitute a chloroplast transit peptide. Positions 55-65 (TTQQKQSNKQT) are enriched in low complexity. Residues 55 to 82 (TTQQKQSNKQTHVSDNKREEKAEEEEEE) form a disordered region. A compositionally biased stretch (basic and acidic residues) spans 66–75 (HVSDNKREEK). Positions 300 to 304 (GHSLG) match the GXSXG motif. The active-site Acyl-ester intermediate is the serine 302. Active-site charge relay system residues include aspartate 366 and histidine 423.

The protein belongs to the AB hydrolase superfamily. Lipase family. Highly expressed in flowers. Lower levels in seedlings, leaves and stems.

The protein resides in the plastid. It localises to the chloroplast. The enzyme catalyses 1,2-dihexadecanoyl-sn-glycero-3-phosphocholine + H2O = 2-hexadecanoyl-sn-glycero-3-phosphocholine + hexadecanoate + H(+). It catalyses the reaction a 1,2-diacyl-3-O-(beta-D-galactosyl)-sn-glycerol + H2O = an acyl-3-O-(beta-D-galactosyl)-sn-glycerol + a fatty acid + H(+). The catalysed reaction is a 1,2-diacyl-3-O-[alpha-D-galactosyl-(1-&gt;6)-beta-D-galactosyl]-sn-glycerol + H2O = acyl-3-O-[alpha-D-galactosyl-(1-&gt;6)-beta-D-galactosyl]-sn-glycerol + a fatty acid + H(+). In terms of biological role, acylhydrolase that catalyzes the hydrolysis of phosphatidylcholine at the sn-1 position. Moderate activity toward phosphatidylcholine (PC), monogalactosyldiacylglycerol (MGDG), digalactosyldiacylglycerol (DGDG) and triacylglycerol (TAG). This chain is Phospholipase A1-Igamma3, chloroplastic, found in Arabidopsis thaliana (Mouse-ear cress).